The following is a 408-amino-acid chain: S-adenosylmethionine synthase (408 aa).

Residue His16 coordinates ATP. Asp18 contacts Mg(2+). A K(+)-binding site is contributed by Glu44. Residues Glu57 and Gln100 each contribute to the L-methionine site. The interval 100 to 110 (QSPEINQGVSR) is flexible loop. Residues 177-179 (DGK), Asp257, 263-264 (RK), Ala280, and Lys284 contribute to the ATP site. Asp257 is a binding site for L-methionine. Lys288 contacts L-methionine.

This sequence belongs to the AdoMet synthase family. Homotetramer; dimer of dimers. It depends on Mg(2+) as a cofactor. The cofactor is K(+).

It localises to the cytoplasm. It carries out the reaction L-methionine + ATP + H2O = S-adenosyl-L-methionine + phosphate + diphosphate. It participates in amino-acid biosynthesis; S-adenosyl-L-methionine biosynthesis; S-adenosyl-L-methionine from L-methionine: step 1/1. In terms of biological role, catalyzes the formation of S-adenosylmethionine (AdoMet) from methionine and ATP. The overall synthetic reaction is composed of two sequential steps, AdoMet formation and the subsequent tripolyphosphate hydrolysis which occurs prior to release of AdoMet from the enzyme. The chain is S-adenosylmethionine synthase from Bifidobacterium animalis subsp. lactis (strain AD011).